We begin with the raw amino-acid sequence, 165 residues long: UPF0303 protein BamMC406_1480 (165 aa).

The protein belongs to the UPF0303 family.

The protein is UPF0303 protein BamMC406_1480 of Burkholderia ambifaria (strain MC40-6).